The primary structure comprises 307 residues: Cytidine deaminase 7 (307 aa).

CMP/dCMP-type deaminase domains are found at residues 22–155 and 185–307; these read TEPI…FTPD and SDCS…FITE. 63-65 contacts substrate; the sequence is NVE. H76 is a binding site for Zn(2+). Residue E78 is the Proton donor of the active site. 2 residues coordinate Zn(2+): C111 and C114.

Belongs to the cytidine and deoxycytidylate deaminase family. In terms of assembly, homodimer. The cofactor is Zn(2+).

The enzyme catalyses cytidine + H2O + H(+) = uridine + NH4(+). It carries out the reaction 2'-deoxycytidine + H2O + H(+) = 2'-deoxyuridine + NH4(+). Its function is as follows. This enzyme scavenges exogenous and endogenous cytidine and 2'-deoxycytidine for UMP synthesis. The chain is Cytidine deaminase 7 (CDA7) from Arabidopsis thaliana (Mouse-ear cress).